The primary structure comprises 625 residues: MAVEKVQAFEKVSIPTEKQPGSEDLGFDPAELQKKYEAERNLRIQNGGVSQYRSAWKSGFGYYLEDPNADANFSRDPISARYDVVIMGGGFSGLLVAARLVQQGITNFTILDKSADFGGTWYWSRYPGAQCDVDSTIYLPLLEEVGYIPKEKYSFGPEILEHAQRIAKHFGLYPKALFQTEVKTCHWSEEDSLWTVQTDRGDNLRAQFIVSAFGISHMPKLPGISGIENFQGKSFHASRWDYNYTGGDSTGNMTKLADKRVGIIGTGATAIQVVPKLAESAKELYVFQRTPSSVDVRNNRPTDAEWAKTLRPGWQQERIDNFYAITTGENVTEDLIDDGWTEIFRLVAAPFFASADIEQSLENRMEQVQIADFKKMESVRARVDSLVKDPATAASLKPWYNQFCKRPCFHDEYLQAFNHPNVTLVDTRGHGVDAVTTKGVLAQGKEYELDCLIYSTGYEWYTEWEQRTRSQVYGRNGLTITKKWSQGITTYHGWGVHGFPNFMVLSSAQVNNVPNYTHMVGYLSRHLAYIVRTCKDRGIKSVEPTATAESKWVQQVVEQGAARRDQMKLCTPGYLNHEGDITEKTDRLYSYNGSGDSKFQIILDKWRDDGKLVGLSIDCATEADL.

Residues Asp112, 120-123 (TWYW), Asp132, and Tyr138 each bind FAD. Position 130–132 (130–132 (QCD)) interacts with NADP(+). Residues 266 to 272 (TGATAIQ), 289 to 290 (RT), and 405 to 406 (KR) each bind NADP(+).

Belongs to the FAD-binding monooxygenase family. FAD is required as a cofactor.

Its pathway is mycotoxin biosynthesis. Its function is as follows. Baeyer-Villiger monooxygenase; part of the core atranone cluster (CAC) which products are predicted to catalyze most or all steps of mycotoxin atranone synthesis, starting from geranylgeranyl pyrophosphate (GGPP). The initial cyclization of GGPP to dolabellane is probably performed by the terpene cyclase ATR13. The Baeyer-Villiger oxidation near the end of the atranone synthesis, which converts atranones D and E to atranones F and G is predicted to be catalyzed by the monooxygenase ATR8. Of the CAC's other predicted gene products, the reducing PKS ATR6 might synthesize a polyketide chain. This polyketide is probably transferred onto the atranone backbone by the polyketide transferase ATR5. Other predicted CAC products include 4 oxygenases (ATR2, ATR3, ATR4, and ATR14), 3 short-chain reductases (ATR7, ATR9, and ATR10), and a methyltransferase (ATR12). These may all be involved in the various steps of atranone biosynthesis, although their specific roles must await experimental determination. The sequence is that of Baeyer-Villiger monooxygenase ATR8 from Stachybotrys chlorohalonatus (strain IBT 40285).